Here is a 130-residue protein sequence, read N- to C-terminus: Glycoprotein hormone beta-5 (130 aa).

The N-terminal stretch at 1 to 24 (MKLVYLVLGAVALLLLGGPDSVLS) is a signal peptide. 5 disulfides stabilise this stretch: C36–C84, C50–C99, C60–C115, C64–C117, and C120–C127. N87 carries N-linked (GlcNAc...) asparagine glycosylation.

It belongs to the glycoprotein hormones subunit beta family. As to quaternary structure, heterodimer with GPHA2; this heterodimer interacts with thyroid-stimulating hormone receptor (TSHR), and hence stimulates cAMP production. In terms of processing, N-glycosylated. In terms of tissue distribution, expressed in the anterior lobe of pituitary.

The protein resides in the secreted. Functions as a heterodimeric glycoprotein hormone with GPHA2 able to bind and activate the thyroid-stimulating hormone receptor (TSHR), leading to increased cAMP production. Plays a central role in controlling thyroid cell metabolism. The polypeptide is Glycoprotein hormone beta-5 (Gphb5) (Mus musculus (Mouse)).